A 1624-amino-acid chain; its full sequence is Reverse gyrase (1624 aa).

The segment at 1–42 (MKAIYRGMCPNCRGAITDERLSNKNPCEGCLSEPILSEDYNE) adopts an RG N-terminal-type zinc-finger fold. Zn(2+)-binding residues include Cys-9, Cys-12, Cys-27, and Cys-30. Residues Gln-89 and 106-113 (APTGMGKS) each bind ATP. A Helicase ATP-binding domain is found at 93-256 (VKRIIRGKSF…KLKKQLAKLL (164 aa)). Positions 213–216 (DDVD) match the DEAD box motif. The tract at residues 636 to 1624 (DLVKSALMIV…LYEEIKRYVR (989 aa)) is topoisomerase I. The region spanning 640–803 (SALMIVESPN…NIKRIEFHEV (164 aa)) is the Toprim domain. Residue Glu-646 participates in Mg(2+) binding. The RG C-terminal-type zinc-finger motif lies at 720 to 749 (IKRCRDCGHQFVDWEQKGVCPRCGSRNVHD). Zn(2+) contacts are provided by Cys-723, Cys-726, Cys-739, and Cys-742. Position 772 (Asp-772) interacts with Mg(2+). Positions 819–1623 (NEDRVNAQLV…ELYEEIKRYV (805 aa)) constitute a Topo IA-type catalytic domain. The region spanning 1107 to 1222 (IFGVILGKGT…LSVYLYQIGI (116 aa)) is the DOD-type homing endonuclease domain. Residue Tyr-1366 is the O-(5'-phospho-DNA)-tyrosine intermediate of the active site.

In the N-terminal section; belongs to the DEAD box helicase family. DDVD subfamily. It in the C-terminal section; belongs to the type IA topoisomerase family. As to quaternary structure, monomer. Requires Zn(2+) as cofactor. Mg(2+) is required as a cofactor. Post-translationally, this protein undergoes a protein self splicing that involves a post-translational excision of the intervening region (intein) followed by peptide ligation.

It localises to the cytoplasm. It catalyses the reaction ATP + H2O = ADP + phosphate + H(+). In terms of biological role, modifies the topological state of DNA by introducing positive supercoils in an ATP-dependent process, increasing the linking number in steps of +1. Binds to single-stranded DNA, transiently cleaves and then rejoins the ends, introducing a positive supercoil in the process. The scissile phosphodiester is attacked by the catalytic tyrosine of the enzyme, resulting in the formation of a DNA-(5'-phosphotyrosyl)-enzyme intermediate. Probably involved in rewinding DNA strands in regions of the chromosome that have opened up to allow replication, transcription, DNA repair and/or for DNA protection. The chain is Reverse gyrase from Pyrococcus horikoshii (strain ATCC 700860 / DSM 12428 / JCM 9974 / NBRC 100139 / OT-3).